Consider the following 202-residue polypeptide: Sterile alpha motif domain-containing protein 10 (202 aa).

The tract at residues 1–22 (MFTELRSKLSPPRARAGAVRPG) is disordered. Residues 118-184 (WSQQDVCKWL…LQQVLHLQVR (67 aa)) enclose the SAM domain.

This is Sterile alpha motif domain-containing protein 10 from Mus musculus (Mouse).